A 210-amino-acid polypeptide reads, in one-letter code: Guanylate kinase (210 aa).

Residues 6–184 form the Guanylate kinase-like domain; it reads GTLYIISAPS…ALQDLKCIIQ (179 aa). ATP is bound at residue 13-20; it reads APSGAGKT.

This sequence belongs to the guanylate kinase family.

The protein resides in the cytoplasm. It carries out the reaction GMP + ATP = GDP + ADP. Its function is as follows. Essential for recycling GMP and indirectly, cGMP. The polypeptide is Guanylate kinase (Nitrosospira multiformis (strain ATCC 25196 / NCIMB 11849 / C 71)).